The primary structure comprises 85 residues: U4-theraphotoxin-Hhn1a (85 aa).

The N-terminal stretch at 1 to 22 (MKMTLIAILTCAAVLVLHTTAA) is a signal peptide. The propeptide occupies 23–48 (EELEAESQLMEVGMPDTELAAVDEER). 3 cysteine pairs are disulfide-bonded: Cys52/Cys66, Cys56/Cys77, and Cys71/Cys82.

This sequence belongs to the neurotoxin 12 (Hwtx-2) family. 02 (Hwtx-2) subfamily. As to quaternary structure, monomer. Expressed by the venom gland.

The protein resides in the secreted. Neurotoxin active on both insects and mammals. In Cyriopagopus hainanus (Chinese bird spider), this protein is U4-theraphotoxin-Hhn1a.